A 328-amino-acid polypeptide reads, in one-letter code: Tetraacyldisaccharide 4'-kinase (328 aa).

59–66 is an ATP binding site; it reads TAGGNGKT.

It belongs to the LpxK family.

The catalysed reaction is a lipid A disaccharide + ATP = a lipid IVA + ADP + H(+). It participates in glycolipid biosynthesis; lipid IV(A) biosynthesis; lipid IV(A) from (3R)-3-hydroxytetradecanoyl-[acyl-carrier-protein] and UDP-N-acetyl-alpha-D-glucosamine: step 6/6. Transfers the gamma-phosphate of ATP to the 4'-position of a tetraacyldisaccharide 1-phosphate intermediate (termed DS-1-P) to form tetraacyldisaccharide 1,4'-bis-phosphate (lipid IVA). The chain is Tetraacyldisaccharide 4'-kinase from Aliivibrio fischeri (strain MJ11) (Vibrio fischeri).